A 115-amino-acid chain; its full sequence is Protein VCF2 (115 aa).

Over residues 1 to 12 the composition is skewed to basic residues; sequence MGGCPVRKRRRN. Positions 1-70 are disordered; it reads MGGCPVRKRR…GPEGNLNQIV (70 aa). A compositionally biased stretch (polar residues) spans 33 to 44; sequence FQDSQDTEFSWS.

Belongs to the VCF family.

This Homo sapiens (Human) protein is Protein VCF2.